A 538-amino-acid polypeptide reads, in one-letter code: SWM histone demethylase complex subunit phf2 (538 aa).

Disordered stretches follow at residues 28–47 (RFPNDLHPTMFEGEESNQNG), 98–150 (EIES…SSPL), and 198–222 (TKSGRKVHRPNHFDPLVKLPTRRRG). Over residues 98–111 (EIESSKNQETDAKS) the composition is skewed to basic and acidic residues. The PHD-type zinc-finger motif lies at 232-288 (AMKCSVCQRLQSPPKNRIVFCDGCNTPFHQLCHEPYISDELLDSPNGEWFCDDCIRR). Over residues 367 to 392 (GDQYLSLNNGTESQSKTTKHSTSLPS) the composition is skewed to polar residues. The segment at 367–396 (GDQYLSLNNGTESQSKTTKHSTSLPSTEPV) is disordered.

Component of the SWM histone demethylase complex composed of at least lsd1, lsd2, phf1 and phf2.

It localises to the nucleus. In terms of biological role, component of the SWM histone demethylase complex that specifically demethylates H3K9me2, a specific tag for epigenetic transcriptional activation, thereby acting as a corepressor. Has a role in regulating heterochromatin propagation and euchromatic transcription. The chain is SWM histone demethylase complex subunit phf2 (phf2) from Schizosaccharomyces pombe (strain 972 / ATCC 24843) (Fission yeast).